The following is a 712-amino-acid chain: Patatin-like phospholipase domain-containing protein AFUA_1G04970 (712 aa).

Over residues 1 to 13 (MTSDEKSATRDIY) the composition is skewed to basic and acidic residues. Residues 1–20 (MTSDEKSATRDIYDPNTLPD) form a disordered region. The chain crosses the membrane as a helical span at residues 85-105 (WPFLFTVFAWITVLGFAYTLT). Residues 275 to 466 (LCLSGGATFA…RTDIPIKALN (192 aa)) form the PNPLA domain. The GXSXG motif lies at 306-310 (GTSGG). Ser-308 acts as the Nucleophile in catalysis. Asp-453 (proton acceptor) is an active-site residue. A disordered region spans residues 628-688 (RRRQDRAQEH…PDARRSSMFE (61 aa)). 2 stretches are compositionally biased toward basic and acidic residues: residues 632-646 (DRAQ…ERLD) and 652-664 (RQSD…HYAE). The span at 667 to 676 (DSLSATSSRP) shows a compositional bias: polar residues. Positions 677–688 (HTPDARRSSMFE) are enriched in basic and acidic residues.

Belongs to the PLPL family.

It is found in the membrane. Its function is as follows. Probable lipid hydrolase. This chain is Patatin-like phospholipase domain-containing protein AFUA_1G04970, found in Aspergillus fumigatus (strain ATCC MYA-4609 / CBS 101355 / FGSC A1100 / Af293) (Neosartorya fumigata).